Reading from the N-terminus, the 70-residue chain is LPSQHLCGSHLVEALYFVCGPKGFYYLPKAXXFVDSLAGYSKHQNGGISGIVEHCCHNTCSLFDLEGYCN.

Cystine bridges form between Cys7/Cys56, Cys19/Cys69, and Cys55/Cys60. Positions 33–49 are cleaved as a propeptide — c peptide; the sequence is FVDSLAGYSKHQNGGIS.

Belongs to the insulin family. In terms of assembly, heterodimer of a B chain and an A chain linked by two disulfide bonds.

The protein localises to the secreted. Insulin decreases blood glucose concentration. It increases cell permeability to monosaccharides, amino acids and fatty acids. It accelerates glycolysis, the pentose phosphate cycle, and glycogen synthesis in liver. This Torpedo marmorata (Marbled electric ray) protein is Insulin (ins).